The sequence spans 488 residues: Argininosuccinate lyase 2 (488 aa).

It belongs to the lyase 1 family. Argininosuccinate lyase subfamily.

It is found in the cytoplasm. The enzyme catalyses 2-(N(omega)-L-arginino)succinate = fumarate + L-arginine. The protein operates within amino-acid biosynthesis; L-arginine biosynthesis; L-arginine from L-ornithine and carbamoyl phosphate: step 3/3. The sequence is that of Argininosuccinate lyase 2 from Rhizobium meliloti (strain 1021) (Ensifer meliloti).